Here is a 618-residue protein sequence, read N- to C-terminus: Serine/threonine-protein kinase TNNI3K (618 aa).

Gly2 carries the N-myristoyl glycine lipid modification. Residues 21–51 are a coiled coil; it reads SESYVITIERLEDDLKIKEKELTELRNIFGS. 10 ANK repeats span residues 66–96, 100–129, 133–162, 166–195, 199–228, 234–263, 269–298, 304–335, 339–368, and 381–410; these read NGLS…RPSR, NGFT…DIQQ, GGLT…NVNI, VFFT…DVNV, VGDR…KADV, EDHV…EVQP, YGDT…TESL, FSET…NINH, DGHT…DMNL, and DEQT…PQDE. The 156-residue stretch at 463 to 618 folds into the Protein kinase domain; the sequence is IEFHEIIGSG…TAHTIYLLAP (156 aa). Residues 469-477 and Lys490 each bind ATP; that span reads IGSGSFGKV. Residue Asp588 is the Proton acceptor of the active site.

The protein belongs to the protein kinase superfamily. TKL Ser/Thr protein kinase family. MAP kinase kinase kinase subfamily. In terms of assembly, interacts with TNNI3, ACTC, ACTA1, MYBPC3, AIP, FABP3 and HADHB. Requires Mg(2+) as cofactor. Post-translationally, autophosphorylated.

Its subcellular location is the nucleus. The protein resides in the cytoplasm. The enzyme catalyses L-seryl-[protein] + ATP = O-phospho-L-seryl-[protein] + ADP + H(+). It catalyses the reaction L-threonyl-[protein] + ATP = O-phospho-L-threonyl-[protein] + ADP + H(+). In terms of biological role, may play a role in cardiac physiology. The polypeptide is Serine/threonine-protein kinase TNNI3K (Pongo abelii (Sumatran orangutan)).